We begin with the raw amino-acid sequence, 152 residues long: uncharacterized protein (152 aa).

N-linked (GlcNAc...) asparagine; by host glycosylation occurs at asparagine 2. The next 3 helical transmembrane spans lie at 5–25 (MILLMVIASFVAGYLSTMNLW), 36–56 (LNDFYMVLLMVGWMIVMCYIL), and 68–88 (LIITITIIIIIVYAIRTQAFI). Asparagine 113 carries an N-linked (GlcNAc...) asparagine; by host glycan.

The protein resides in the membrane. This is an uncharacterized protein from Acanthamoeba polyphaga mimivirus (APMV).